Consider the following 141-residue polypeptide: Hemoglobin subunit alpha-D (141 aa).

One can recognise a Globin domain in the interval 1–141 (VLTAEDKKLI…VAAVLAEKYR (141 aa)). Heme b contacts are provided by His58 and His87.

Belongs to the globin family. Heterotetramer of two alpha-D chains and two beta chains. Red blood cells.

Involved in oxygen transport from the lung to the various peripheral tissues. In Sturnus vulgaris (Starling), this protein is Hemoglobin subunit alpha-D (HBAD).